We begin with the raw amino-acid sequence, 219 residues long: Lipid transferase CIDEB (219 aa).

The 78-residue stretch at 33–110 folds into the CIDE-N domain; the sequence is PRQRPFRVCD…VLELGQSWSP (78 aa).

It belongs to the CIDE family. As to quaternary structure, interacts with DFFA. Interacts with DFFB; inhibited by DFFB. Interacts with APOB. Interacts with PREB/SEC12; facilitating loading of SCAP-SREBP into COPII vesicles.

The protein resides in the lipid droplet. It localises to the endoplasmic reticulum membrane. Its subcellular location is the golgi apparatus. It is found in the cytoplasmic vesicle. The protein localises to the COPI-coated vesicle. Functionally, lipid transferase specifically expressed in hepatocytes, which promotes unilocular lipid droplet formation by mediating lipid droplet fusion. Lipid droplet fusion promotes their enlargement, restricting lipolysis and favoring lipid storage. Localizes on the lipid droplet surface, at focal contact sites between lipid droplets, and mediates atypical lipid droplet fusion by promoting directional net neutral lipid transfer from the smaller to larger lipid droplets. The transfer direction may be driven by the internal pressure difference between the contacting lipid droplet pair. Promotes lipid exchange and lipid droplet fusion in both small and large lipid droplet-containing hepatocytes. In addition to its role in lipid droplet fusion, also involved in cytoplasmic vesicle biogenesis and transport. Required for very-low-density lipoprotein (VLDL) lipidation and maturation. Probably involved in the biogenesis of VLDL transport vesicles by forming a COPII vesicle coat and facilitating the formation of endoplasmic reticulum-derived large vesicles. Also involved in sterol-regulated export of the SCAP-SREBP complex, composed of SCAP, SREBF1/SREBP1 and SREBF2/SREBP2, by promoting loading of SCAP-SREBP into COPII vesicles. May also activate apoptosis. This Bos taurus (Bovine) protein is Lipid transferase CIDEB (CIDEB).